We begin with the raw amino-acid sequence, 604 residues long: Solute carrier family 23 member 1 (604 aa).

A disordered region spans residues 1–29; that stretch reads MKAQEDPGSSKQHECPDSAGTSTRDQQAP. Over 1-59 the chain is Cytoplasmic; sequence MKAQEDPGSSKQHECPDSAGTSTRDQQAPLPAEPKFDMLYKIEDVPPWYLCILLGFQHY. Residues 60–80 form a helical membrane-spanning segment; the sequence is LTCFSGTIAVPFLLAEALCVG. Residues 81–88 lie on the Extracellular side of the membrane; the sequence is RDQHMISQ. A helical membrane pass occupies residues 89-109; the sequence is LIGTIFTCVGITTLIQTTVGI. Residue Arg110 is a topological domain, cytoplasmic. The chain crosses the membrane as a helical span at residues 111 to 131; sequence LPLFQASAFAFLVPAKAILAL. At 132–166 the chain is on the extracellular side; it reads ERWKCPPEEEIYGNWSMPLNTSHIWHPRIREVQGA. Asn145 and Asn151 each carry an N-linked (GlcNAc...) asparagine glycan. A helical membrane pass occupies residues 167–187; sequence IMVSSVVEVVIGLLGLPGALL. The Cytoplasmic portion of the chain corresponds to 188-214; that stretch reads SYIGPLTVTPTVSLIGLSVFQAAGDRA. The helical transmembrane segment at 215–232 threads the bilayer; the sequence is GSHWGISACSILLIVLFS. Over 233–236 the chain is Extracellular; sequence QYLR. The segment at residues 237–250 is an intramembrane region (helical); the sequence is NLTFLLPVYRWGKG. At 251-257 the chain is on the extracellular side; it reads LTLFRIQ. The helical transmembrane segment at 258–278 threads the bilayer; the sequence is IFKMFPIVLAIMTVWLLCYVL. Residues 279 to 319 are Cytoplasmic-facing; that stretch reads TLTDVLPADPTVYGFQARTDARGDIMAISPWIRIPYPCQWG. The chain crosses the membrane as a helical span at residues 320–340; the sequence is LPTVTVAAVLGMFSATLAGII. Topologically, residues 341–365 are extracellular; the sequence is ESIGDYYACARLAGAPPPPVHAINR. A helical transmembrane segment spans residues 366–386; that stretch reads GIFTEGVCCIIAGLLGTGNGS. The Cytoplasmic segment spans residues 387–409; the sequence is TSSSPNIGVLGITKVGSRRVVQY. Residues 410–430 traverse the membrane as a helical segment; sequence GAGIMLILGAIGKFTALFASL. Over 431–433 the chain is Extracellular; it reads PDP. Residues 434 to 454 traverse the membrane as a helical segment; sequence ILGGMFCTLFGMITAVGLSNL. Residues 455-464 are Cytoplasmic-facing; it reads QFVDMNSSRN. Residues 465-485 form a helical membrane-spanning segment; that stretch reads LFVLGFSMFFGLTLPNYLDSN. Over 486-497 the chain is Extracellular; the sequence is PGAINTGVPEVD. A helical membrane pass occupies residues 498–518; sequence QILTVLLTTEMFVGGCLAFIL. The Cytoplasmic segment spans residues 519–604; sequence DNTVPGSPEE…TETGSVCTKV (86 aa). Thr597 carries the phosphothreonine modification. The residue at position 599 (Ser599) is a Phosphoserine. Residue Thr602 is modified to Phosphothreonine.

It belongs to the nucleobase:cation symporter-2 (NCS2) (TC 2.A.40) family. Post-translationally, phosphorylated. In terms of tissue distribution, highly expressed in the straight segment of proximal tubules in the kidney, in intestine and liver. Detected in epithelial cells of the bronchiole and epididymis.

It localises to the cell membrane. It carries out the reaction L-ascorbate(out) + 2 Na(+)(out) = L-ascorbate(in) + 2 Na(+)(in). The catalysed reaction is urate(out) + 2 Na(+)(out) = urate(in) + 2 Na(+)(in). In terms of biological role, sodium/ascorbate cotransporter. Mediates electrogenic uptake of vitamin C, with a stoichiometry of 2 Na(+) for each ascorbate. Has retained some ancestral activity toward nucleobases such as urate, an oxidized purine. Low-affinity high-capacity sodium:urate cotransporter, may regulate serum urate levels by serving as a renal urate re-absorber. In Rattus norvegicus (Rat), this protein is Solute carrier family 23 member 1 (Slc23a1).